We begin with the raw amino-acid sequence, 376 residues long: MLNFELITTDGNARRGRVTLNHGVVETPIFMPVGTYGSVKAMSPLELNEIGAQIILGNTFHLWLRPGLDVVNAHEGLHRFIGWDKPILTDSGGFQVFSLGDLRKITEDGVTFASPVNGDKLFLSPEISMQIQRTLNSDIVMQFDECTPYEIDGRPATHEEAAKSMRMSLRWARRSRDEFERLANPNALFGIVQGGMYEDLRDESLAGLSELDFHGFAIGGLSVGEPKEDMMRVLEHVAPRLPANKPHYLMGVGTPEDLVAGVAAGVDMFDCVMPTRNARNGWLFTRYGDVKIKNAAHRNDPRPLDESCACYTCRNFSRAYLHHLHRVGEILGARLNTIHNLHYYLQLMREVREAIEQHRFADFRRQFAADRARGTQ.

The active-site Proton acceptor is aspartate 90. Substrate contacts are provided by residues 90 to 94 (DSGGF), aspartate 144, glutamine 193, and glycine 220. The tract at residues 251 to 257 (GVGTPED) is RNA binding. Catalysis depends on aspartate 270, which acts as the Nucleophile. The segment at 275 to 279 (TRNAR) is RNA binding; important for wobble base 34 recognition. 4 residues coordinate Zn(2+): cysteine 308, cysteine 310, cysteine 313, and histidine 339.

Belongs to the queuine tRNA-ribosyltransferase family. In terms of assembly, homodimer. Within each dimer, one monomer is responsible for RNA recognition and catalysis, while the other monomer binds to the replacement base PreQ1. Zn(2+) is required as a cofactor.

The enzyme catalyses 7-aminomethyl-7-carbaguanine + guanosine(34) in tRNA = 7-aminomethyl-7-carbaguanosine(34) in tRNA + guanine. The protein operates within tRNA modification; tRNA-queuosine biosynthesis. Catalyzes the base-exchange of a guanine (G) residue with the queuine precursor 7-aminomethyl-7-deazaguanine (PreQ1) at position 34 (anticodon wobble position) in tRNAs with GU(N) anticodons (tRNA-Asp, -Asn, -His and -Tyr). Catalysis occurs through a double-displacement mechanism. The nucleophile active site attacks the C1' of nucleotide 34 to detach the guanine base from the RNA, forming a covalent enzyme-RNA intermediate. The proton acceptor active site deprotonates the incoming PreQ1, allowing a nucleophilic attack on the C1' of the ribose to form the product. After dissociation, two additional enzymatic reactions on the tRNA convert PreQ1 to queuine (Q), resulting in the hypermodified nucleoside queuosine (7-(((4,5-cis-dihydroxy-2-cyclopenten-1-yl)amino)methyl)-7-deazaguanosine). This chain is Queuine tRNA-ribosyltransferase, found in Cupriavidus taiwanensis (strain DSM 17343 / BCRC 17206 / CCUG 44338 / CIP 107171 / LMG 19424 / R1) (Ralstonia taiwanensis (strain LMG 19424)).